A 339-amino-acid chain; its full sequence is Phosphoribosylformylglycinamidine cyclo-ligase (339 aa).

The protein belongs to the AIR synthase family.

The protein resides in the cytoplasm. It catalyses the reaction 2-formamido-N(1)-(5-O-phospho-beta-D-ribosyl)acetamidine + ATP = 5-amino-1-(5-phospho-beta-D-ribosyl)imidazole + ADP + phosphate + H(+). It functions in the pathway purine metabolism; IMP biosynthesis via de novo pathway; 5-amino-1-(5-phospho-D-ribosyl)imidazole from N(2)-formyl-N(1)-(5-phospho-D-ribosyl)glycinamide: step 2/2. In Fusobacterium nucleatum subsp. nucleatum (strain ATCC 25586 / DSM 15643 / BCRC 10681 / CIP 101130 / JCM 8532 / KCTC 2640 / LMG 13131 / VPI 4355), this protein is Phosphoribosylformylglycinamidine cyclo-ligase.